The following is a 400-amino-acid chain: Acetate kinase (400 aa).

Residue N10 participates in Mg(2+) binding. K17 provides a ligand contact to ATP. A substrate-binding site is contributed by R91. Catalysis depends on D150, which acts as the Proton donor/acceptor. ATP-binding positions include H210–G214, D285–R287, and G333–N337. E387 contacts Mg(2+).

It belongs to the acetokinase family. As to quaternary structure, homodimer. Requires Mg(2+) as cofactor. Mn(2+) serves as cofactor.

The protein resides in the cytoplasm. It carries out the reaction acetate + ATP = acetyl phosphate + ADP. It participates in metabolic intermediate biosynthesis; acetyl-CoA biosynthesis; acetyl-CoA from acetate: step 1/2. Catalyzes the formation of acetyl phosphate from acetate and ATP. Can also catalyze the reverse reaction. In Erwinia tasmaniensis (strain DSM 17950 / CFBP 7177 / CIP 109463 / NCPPB 4357 / Et1/99), this protein is Acetate kinase.